We begin with the raw amino-acid sequence, 419 residues long: Voltage-gated potassium channel subunit beta-1 (419 aa).

The disordered stretch occupies residues 1-52 (MLAARTGAAGSQISEENTKLRRQSGFSVAGKDKSPKKASENAKDSSLSPSGE). Over residues 30-43 (GKDKSPKKASENAK) the composition is skewed to basic and acidic residues. Positions 108, 109, 115, and 137 each coordinate NADP(+). Tyr-142 acts as the Proton donor/acceptor in catalysis. Asn-210, Ser-240, Arg-241, Gln-266, Trp-295, Ser-296, Pro-297, Leu-298, Ala-299, Cys-300, Lys-306, Arg-316, Gly-375, Ser-377, Gln-381, Glu-384, and Asn-385 together coordinate NADP(+).

It belongs to the shaker potassium channel beta subunit family. In terms of assembly, homotetramer. Interaction with tetrameric potassium channel alpha subunits gives rise to a heterooctamer. Identified in potassium channel complexes containing KCNA1, KCNA2, KCNA4, KCNA5, KCNA6, KCNAB1 and KCNAB2. Part of a complex containing KCNA1, KCNA4 and LGI1; interaction with LGI1 inhibits down-regulation of KCNA1 channel activity. Interacts with the dimer formed by GNB1 and GNG2; this enhances KCNA1 binding. Interacts with SQSTM1. As to expression, in brain, expression is most prominent in caudate nucleus, hippocampus and thalamus. Significant expression also detected in amygdala and subthalamic nucleus. Also expressed in both healthy and cardiomyopathic heart. Up to four times more abundant in left ventricle than left atrium.

It localises to the cytoplasm. The protein localises to the membrane. It is found in the cell membrane. The catalysed reaction is a primary alcohol + NADP(+) = an aldehyde + NADPH + H(+). It catalyses the reaction a secondary alcohol + NADP(+) = a ketone + NADPH + H(+). Regulatory subunit of the voltage-gated potassium (Kv) Shaker channels composed of pore-forming and potassium-conducting alpha subunits and of regulatory beta subunits. The beta-1/KCNAB1 cytoplasmic subunit mediates closure of delayed rectifier potassium channels by physically obstructing the pore via its N-terminal domain and increases the speed of channel closure for other family members. Promotes the inactivation of Kv1.1/KCNA1, Kv1.2/KCNA2, Kv1.4/KCNA4, Kv1.5/KCNA5 and Kv1.6/KCNA6 alpha subunit-containing channels. Displays nicotinamide adenine dinucleotide phosphate (NADPH)-dependent aldoketoreductase activity by catalyzing the NADPH-dependent reduction of a variety of endogenous aldehydes and ketones. The binding of NADPH is required for efficient down-regulation of potassium channel activity. Oxidation of the bound NADPH restrains N-terminal domain from blocking the channel, thereby decreasing N-type inactivation of potassium channel activity. In terms of biological role, isoform KvB1.2 shows no effect on KCNA1, KCNA2 or KCNB1. This chain is Voltage-gated potassium channel subunit beta-1, found in Homo sapiens (Human).